The sequence spans 248 residues: Geranylgeranylglyceryl phosphate synthase (248 aa).

Mg(2+) contacts are provided by D25 and S50. Residues 170 to 176 (YLEAGSG), 201 to 202 (GG), and 223 to 224 (GT) contribute to the sn-glycerol 1-phosphate site.

This sequence belongs to the GGGP/HepGP synthase family. Group II subfamily. It depends on Mg(2+) as a cofactor.

It is found in the cytoplasm. The catalysed reaction is sn-glycerol 1-phosphate + (2E,6E,10E)-geranylgeranyl diphosphate = sn-3-O-(geranylgeranyl)glycerol 1-phosphate + diphosphate. The protein operates within membrane lipid metabolism; glycerophospholipid metabolism. Functionally, prenyltransferase that catalyzes the transfer of the geranylgeranyl moiety of geranylgeranyl diphosphate (GGPP) to the C3 hydroxyl of sn-glycerol-1-phosphate (G1P). This reaction is the first ether-bond-formation step in the biosynthesis of archaeal membrane lipids. The chain is Geranylgeranylglyceryl phosphate synthase from Methanococcus aeolicus (strain ATCC BAA-1280 / DSM 17508 / OCM 812 / Nankai-3).